The chain runs to 431 residues: Tryptophan synthase beta chain 2 (431 aa).

An N6-(pyridoxal phosphate)lysine modification is found at K111.

The protein belongs to the TrpB family. As to quaternary structure, tetramer of two alpha and two beta chains. Requires pyridoxal 5'-phosphate as cofactor.

The catalysed reaction is (1S,2R)-1-C-(indol-3-yl)glycerol 3-phosphate + L-serine = D-glyceraldehyde 3-phosphate + L-tryptophan + H2O. It participates in amino-acid biosynthesis; L-tryptophan biosynthesis; L-tryptophan from chorismate: step 5/5. The beta subunit is responsible for the synthesis of L-tryptophan from indole and L-serine. The sequence is that of Tryptophan synthase beta chain 2 (trpB2) from Sulfurisphaera tokodaii (strain DSM 16993 / JCM 10545 / NBRC 100140 / 7) (Sulfolobus tokodaii).